A 201-amino-acid polypeptide reads, in one-letter code: Small ribosomal subunit protein uS4c (201 aa).

Positions methionine 89–leucine 152 constitute an S4 RNA-binding domain.

Belongs to the universal ribosomal protein uS4 family. As to quaternary structure, part of the 30S ribosomal subunit. Contacts protein S5. The interaction surface between S4 and S5 is involved in control of translational fidelity.

Its subcellular location is the plastid. The protein localises to the chloroplast. Functionally, one of the primary rRNA binding proteins, it binds directly to 16S rRNA where it nucleates assembly of the body of the 30S subunit. In terms of biological role, with S5 and S12 plays an important role in translational accuracy. This chain is Small ribosomal subunit protein uS4c (rps4), found in Olimarabidopsis pumila (Dwarf rocket).